The chain runs to 772 residues: Protein transport protein SEC23 F (772 aa).

Positions 65, 68, 87, and 90 each coordinate Zn(2+). A zinc finger-like region spans residues 65-90 (CKTCKALLNAFARVDFAAMNWVCPFC).

Belongs to the SEC23/SEC24 family. SEC23 subfamily. As to quaternary structure, component of the coat protein complex II (COPII), composed of at least five proteins: the Sec23/24 complex, the Sec13/31 complex and Sar1. Interacts with SEC24A.

It is found in the cytoplasmic vesicle. The protein localises to the COPII-coated vesicle membrane. Its subcellular location is the endoplasmic reticulum membrane. It localises to the membrane. Component of the coat protein complex II (COPII) which promotes the formation of transport vesicles from the endoplasmic reticulum (ER). The coat has two main functions, the physical deformation of the endoplasmic reticulum membrane into vesicles and the selection of cargo molecules. The polypeptide is Protein transport protein SEC23 F (Arabidopsis thaliana (Mouse-ear cress)).